We begin with the raw amino-acid sequence, 699 residues long: Lutropin-choriogonadotropic hormone receptor (699 aa).

A signal peptide spans 1–26 (MKQRFSALQLLKLLLLLQPPLPRALR). Residues 27-66 (EALCPEPCNCVPDGALRCPGPTAGLTRLSLAYLPVKVIPS) form the LRRNT domain. Residues 27 to 363 (EALCPEPCNC…EDIMGYDFLR (337 aa)) are Extracellular-facing. LRR repeat units lie at residues 96–115 (NLLNLSEILIQNTKNLRYIE), 124–145 (RLKYLSICNTGIRKFPDVTKVF), and 149–171 (SNFILEICDNLHITTIPGNAFQG). Residue Asn-99 is glycosylated (N-linked (GlcNAc...) asparagine). N-linked (GlcNAc...) asparagine glycans are attached at residues Asn-174 and Asn-195. LRR repeat units lie at residues 175–196 (ESVTLKLYGNGFEEVQSHAFNG), 198–220 (TLTSLELKENVHLEKMHNGAFRG), and 223–244 (GPKTLDISSTKLQALPSYGLES). 3 N-linked (GlcNAc...) asparagine glycosylation sites follow: Asn-291, Asn-299, and Asn-313. Tyr-331 carries the post-translational modification Sulfotyrosine. A helical transmembrane segment spans residues 364 to 385 (VLIWLINILAIMGNMTVLFVLL). At 386–395 (TSRYKLTVPR) the chain is on the cytoplasmic side. The chain crosses the membrane as a helical span at residues 396-416 (FLMCNLSFADFCMGLYLLLIA). The Extracellular segment spans residues 417–439 (SVDSQTKGQYYNHAIDWQTGSGC). A disulfide bond links Cys-439 and Cys-514. Residues 440–462 (STAGFFTVFASELSVYTLTVITL) form a helical membrane-spanning segment. The Cytoplasmic portion of the chain corresponds to 463 to 482 (ERWHTITYAIHLDQKLRLRH). Residues 483–505 (AILIMLGGWLFSSLIAMLPLVGV) traverse the membrane as a helical segment. Over 506-525 (SNYMKVSICFPMDVETTLSQ) the chain is Extracellular. Residues 526 to 549 (VYILTILILNVVAFFIICACYIKI) traverse the membrane as a helical segment. The Cytoplasmic portion of the chain corresponds to 550–570 (YFAVRNPELMATNKDTKIAKK). Residues 571–594 (MAILIFTDFTCMAPISFFAISAAF) traverse the membrane as a helical segment. Residues 595–605 (KVPLITVTNSK) lie on the Extracellular side of the membrane. A helical membrane pass occupies residues 606–627 (VLLVLFYPINSCANPFLYAIFT). Topologically, residues 628–699 (KTFQRDFFLL…LLDKTRYTEC (72 aa)) are cytoplasmic. S-palmitoyl cysteine attachment occurs at residues Cys-643 and Cys-644.

Belongs to the G-protein coupled receptor 1 family. FSH/LSH/TSH subfamily. In terms of processing, sulfated. In terms of tissue distribution, gonadal and thyroid cells.

Its subcellular location is the cell membrane. In terms of biological role, receptor for lutropin-choriogonadotropic hormone. The activity of this receptor is mediated by G proteins which activate adenylate cyclase. The sequence is that of Lutropin-choriogonadotropic hormone receptor (LHCGR) from Homo sapiens (Human).